A 72-amino-acid polypeptide reads, in one-letter code: Translation initiation factor IF-1 (72 aa).

The S1-like domain occupies 1 to 72 (MAKEDNIEMQ…TKGRIVFRAR (72 aa)).

This sequence belongs to the IF-1 family. In terms of assembly, component of the 30S ribosomal translation pre-initiation complex which assembles on the 30S ribosome in the order IF-2 and IF-3, IF-1 and N-formylmethionyl-tRNA(fMet); mRNA recruitment can occur at any time during PIC assembly.

It is found in the cytoplasm. In terms of biological role, one of the essential components for the initiation of protein synthesis. Stabilizes the binding of IF-2 and IF-3 on the 30S subunit to which N-formylmethionyl-tRNA(fMet) subsequently binds. Helps modulate mRNA selection, yielding the 30S pre-initiation complex (PIC). Upon addition of the 50S ribosomal subunit IF-1, IF-2 and IF-3 are released leaving the mature 70S translation initiation complex. This is Translation initiation factor IF-1 from Shewanella baltica (strain OS155 / ATCC BAA-1091).